The chain runs to 512 residues: Protein singed (512 aa).

Belongs to the fascin family. Interacts with Rab35, with stronger binding to the Rab35-GTP form compared to the Rab35-GDP form.

The protein resides in the cytoplasm. It localises to the cytoskeleton. Acts as an actin bundling protein. May have a role in the asymmetric organization and/or movement of cytoplasmic components. It has a role in somatic cells during the formation of adult bristles and hairs, and in the female germline during oogenesis. The chain is Protein singed (sn) from Drosophila melanogaster (Fruit fly).